A 511-amino-acid chain; its full sequence is UDP-N-acetylhexosamine pyrophosphorylase-like protein 1 (511 aa).

The span at 1–19 (MDRSESAESAESRRRRAEE) shows a compositional bias: basic and acidic residues. Residues 1-22 (MDRSESAESAESRRRRAEESGQ) are disordered. The Substrate binding signature appears at 117–120 (LAGG). UTP is bound by residues 117-120 (LAGG), Lys131, Gln205, and Gly231. Residue Asn232 participates in substrate binding. Residue Asp262 coordinates UTP. The Substrate binding signature appears at 312–313 (EY). Lys386 serves as a coordination point for UTP. Lys416 is a binding site for substrate.

Belongs to the UDPGP type 1 family.

This is UDP-N-acetylhexosamine pyrophosphorylase-like protein 1 (uap1l1) from Xenopus tropicalis (Western clawed frog).